Here is a 353-residue protein sequence, read N- to C-terminus: CCN family member 3 (353 aa).

The signal sequence occupies residues 1 to 26; sequence MEPGGGHSLPVLLLLLLLLLLRPSEV. The region spanning 29–103 is the IGFBP N-terminal domain; sequence REAPCPRPCG…GGGTGICMVL (75 aa). 6 disulfides stabilise this stretch: C33–C59, C37–C61, C41–C62, C48–C65, C73–C87, and C79–C100. Residues 106–172 form the VWFC domain; that stretch reads DNCVFDGMIY…GECCEKWVCE (67 aa). The TSP type-1 domain maps to 203–248; sequence NCIEQTTEWSACSRSCGMGFSTRVTNRNQQCEMVKQTRLCMMRPCE. 5 disulfide bridges follow: C260-C297, C277-C311, C288-C327, C291-C329, and C296-C333. In terms of domain architecture, CTCK spans 260-334; it reads CIRTKKSMKA…NTCVCHGNCP (75 aa). N276 carries an N-linked (GlcNAc...) asparagine glycan.

This sequence belongs to the CCN family.

It is found in the secreted. Its subcellular location is the cytoplasm. It localises to the cell junction. The protein resides in the gap junction. Functionally, immediate-early protein likely to play a role in cell growth regulation. In Coturnix japonica (Japanese quail), this protein is CCN family member 3 (CCN3).